Here is a 557-residue protein sequence, read N- to C-terminus: Probable asparagine synthetase [glutamine-hydrolyzing] (557 aa).

Residue C2 is the For GATase activity of the active site. Residues 2-188 enclose the Glutamine amidotransferase type-2 domain; sequence CGILAILNSL…PGHYFSSKTK (187 aa). L-glutamine-binding positions include 50–54, 75–77, and D101; these read RLAIV and NGE. In terms of domain architecture, Asparagine synthetase spans 217-466; the sequence is AIKEAFEQAV…LPSSVLWRQK (250 aa). ATP-binding positions include L239, I279, and 353-354; that span reads SG. Residues 538 to 557 form a disordered region; it reads WGASQDPSGRAQKVHLSTTE.

It carries out the reaction L-aspartate + L-glutamine + ATP + H2O = L-asparagine + L-glutamate + AMP + diphosphate + H(+). Its pathway is amino-acid biosynthesis; L-asparagine biosynthesis; L-asparagine from L-aspartate (L-Gln route): step 1/1. This is Probable asparagine synthetase [glutamine-hydrolyzing] (asns) from Dictyostelium discoideum (Social amoeba).